Reading from the N-terminus, the 460-residue chain is Nuclear distribution protein PAC1-1 (460 aa).

The region spanning 9–41 (QADELHRALIAYLTAANLPNTAAALREELNLGE) is the LisH domain. The stretch at 74 to 96 (LVTQIMDLESRNHILQSELDNAT) forms a coiled coil. Over residues 90–100 (SELDNATPTSR) the composition is skewed to polar residues. The segment at 90 to 115 (SELDNATPTSRQNKDPVAWLPRAPPR) is disordered. WD repeat units lie at residues 120–161 (SHRD…RTIK), 163–203 (HTKA…KNIR), 207–247 (GHDH…CVKT), 250–289 (GHAEWVRDVCPSFDGKYILSTSDDYTSRLWDVTVTNPEPR), 294–354 (GHEH…KTLA), 355–394 (GHDNWVRGLVFHPGGKYLLSVSDDKTLRCWDLTQEGKCVK), 399–439 (AHGH…VTPD), and 441–460 (QIRCVIATGSVDLNVRIFAN).

Belongs to the WD repeat LIS1/nudF family. As to quaternary structure, self-associates. Interacts with NDL1 and dynein.

Its subcellular location is the cytoplasm. The protein localises to the cytoskeleton. The protein resides in the spindle pole. Its function is as follows. Positively regulates the activity of the minus-end directed microtubule motor protein dynein. May enhance dynein-mediated microtubule sliding by targeting dynein to the microtubule plus end. Required for nuclear migration during vegetative growth as well as development. Required for retrograde early endosome (EE) transport from the hyphal tip. Required for localization of dynein to the mitotic spindle poles. Recruits additional proteins to the dynein complex at SPBs. This chain is Nuclear distribution protein PAC1-1, found in Sordaria macrospora (strain ATCC MYA-333 / DSM 997 / K(L3346) / K-hell).